Consider the following 114-residue polypeptide: MTVLLVALGGALGATTRYLTGRYVDSYRSFPVATFLVNVAGCLILGLLSGASLSEQTFALLGTGFCGGLTTYSTFAVESVGLLRIRRALPSVVYVVASVAAGLAAAWLGFRLTS.

3 helical membrane passes run 30 to 50 (FPVATFLVNVAGCLILGLLSG), 57 to 77 (TFALLGTGFCGGLTTYSTFAV), and 88 to 108 (ALPSVVYVVASVAAGLAAAWL). 2 residues coordinate Na(+): glycine 67 and threonine 70.

It belongs to the fluoride channel Fluc/FEX (TC 1.A.43) family.

It localises to the cell membrane. The catalysed reaction is fluoride(in) = fluoride(out). Its activity is regulated as follows. Na(+) is not transported, but it plays an essential structural role and its presence is essential for fluoride channel function. In terms of biological role, fluoride-specific ion channel. Important for reducing fluoride concentration in the cell, thus reducing its toxicity. This chain is Fluoride-specific ion channel FluC 2, found in Rhodococcus jostii (strain RHA1).